A 591-amino-acid chain; its full sequence is L-fucose isomerase (591 aa).

Catalysis depends on proton acceptor residues Glu-337 and Asp-361. Mn(2+) is bound by residues Glu-337, Asp-361, and His-528.

Belongs to the L-fucose isomerase family. As to quaternary structure, homohexamer. Requires Mn(2+) as cofactor.

The protein resides in the cytoplasm. It catalyses the reaction L-fucose = L-fuculose. It functions in the pathway carbohydrate degradation; L-fucose degradation; L-lactaldehyde and glycerone phosphate from L-fucose: step 1/3. Functionally, converts the aldose L-fucose into the corresponding ketose L-fuculose. The chain is L-fucose isomerase from Salmonella typhi.